The following is a 67-amino-acid chain: Large ribosomal subunit protein bL35 (67 aa).

Belongs to the bacterial ribosomal protein bL35 family.

The polypeptide is Large ribosomal subunit protein bL35 (Gloeothece citriformis (strain PCC 7424) (Cyanothece sp. (strain PCC 7424))).